The following is a 116-amino-acid chain: Photosystem II reaction center Psb28 protein (116 aa).

It belongs to the Psb28 family. As to quaternary structure, part of the photosystem II complex.

It localises to the plastid. The protein resides in the chloroplast thylakoid membrane. The protein is Photosystem II reaction center Psb28 protein of Guillardia theta (Cryptophyte).